The chain runs to 451 residues: UDP-glycosyltransferase 13 (451 aa).

His-15 functions as the Proton acceptor in the catalytic mechanism. Position 15 (His-15) interacts with an anthocyanidin. Residue Asp-93 is the Charge relay of the active site. Residues Ala-326, Gln-328, His-343, Trp-346, Asn-347, Ser-348, and Glu-351 each coordinate UDP-alpha-D-glucose. Residue Ala-366 coordinates an anthocyanidin. Residues Glu-367 and Gln-368 each coordinate UDP-alpha-D-glucose.

The protein belongs to the UDP-glycosyltransferase family. In terms of tissue distribution, expressed in roots. Detected in stems and leaves.

The enzyme catalyses a 7-hydroxyisoflavone + UDP-alpha-D-glucose = a 7-hydroxyisoflavone 7-O-beta-D-glucoside + UDP + H(+). In terms of biological role, isoflavone 7-O-glucosyltransferase converting daidzein to daidzin, genistein to genistin and formononetin to ononin. Shows some activity toward the flavanones liquiritigenin and naringenin, but not toward cyanidin, isoliquiritigenin, apigenin, luteolin, kaempferol, quercetin, daidzin and puerarin. This is UDP-glycosyltransferase 13 from Pueraria montana var. lobata (Kudzu vine).